Here is a 263-residue protein sequence, read N- to C-terminus: MARIVMLGACGKMGREISKNLLMHSEHELVGFVDVVNVGQDFGEILGISRLGKTVEDNLKEVILKTNPEIVLDFSRASGAFTNILIALENKVRVVSGTTGFSQEQIKKIEDVSNANNLGCIIAPNFSIGALLLMKLAQMAAKYFSHVEIIEYHHNLKVDAPSGTAIKTAELLSSIRENQPSAIQEEEKIPGSRGGDYRGIKIHSVRLPGLVAHQEVIFGGRGQSLTLRHDVYSRESYLDGILFALKKVLELDRFVFGLDELLF.

Residues 8–13, aspartate 34, 97–99, and 123–126 contribute to the NAD(+) site; these read GACGKM, GTT, and APNF. Catalysis depends on histidine 153, which acts as the Proton donor/acceptor. Histidine 154 provides a ligand contact to (S)-2,3,4,5-tetrahydrodipicolinate. Lysine 157 functions as the Proton donor in the catalytic mechanism. A (S)-2,3,4,5-tetrahydrodipicolinate-binding site is contributed by 163 to 164; sequence GT.

Belongs to the DapB family.

The protein localises to the cytoplasm. The enzyme catalyses (S)-2,3,4,5-tetrahydrodipicolinate + NAD(+) + H2O = (2S,4S)-4-hydroxy-2,3,4,5-tetrahydrodipicolinate + NADH + H(+). It carries out the reaction (S)-2,3,4,5-tetrahydrodipicolinate + NADP(+) + H2O = (2S,4S)-4-hydroxy-2,3,4,5-tetrahydrodipicolinate + NADPH + H(+). The protein operates within amino-acid biosynthesis; L-lysine biosynthesis via DAP pathway; (S)-tetrahydrodipicolinate from L-aspartate: step 4/4. Catalyzes the conversion of 4-hydroxy-tetrahydrodipicolinate (HTPA) to tetrahydrodipicolinate. In Carboxydothermus hydrogenoformans (strain ATCC BAA-161 / DSM 6008 / Z-2901), this protein is 4-hydroxy-tetrahydrodipicolinate reductase.